Consider the following 1730-residue polypeptide: SH3 and multiple ankyrin repeat domains protein 3 (1730 aa).

Positions 1 to 75 (MDGPGASAVV…KFLDEERLLQ (75 aa)) are intramolecular interaction with the ANK repeats. Position 122 is a phosphotyrosine (Y122). ANK repeat units lie at residues 148–178 (SGEC…HLDF), 182–211 (DGLT…SPDY), 215–245 (RGLT…QLGT), 249–278 (NGWQ…NMGA), 282–311 (SGNT…NKDV), and 315–345 (NSQT…DVVP). The segment at 354–466 (KRRRLAGPSG…PPPRGPKRKL (113 aa)) is disordered. Phosphoserine is present on residues S373, S375, S387, and S394. Residues 404–415 (LQEEKDRDRDGE) are compositionally biased toward basic and acidic residues. Over residues 444–460 (APGPGPASPAPPAPPPR) the composition is skewed to pro residues. One can recognise an SH3 domain in the interval 470–529 (VPGRKFIAVKAHSPQGEGEIPLHRGEAVKVLSIGEGGFWEGTVKGRTGWFPADCVEEVQM). A Phosphoserine modification is found at S482. Position 555 is a phosphotyrosine (Y555). Residues 570 to 664 (VAILQKRDHE…RLVMKVVSVT (95 aa)) form the PDZ domain. Residues 664 to 688 (TRKPEEDGARRRAPPPPKRAPSTTL) are disordered. Positions 677–684 (PPPPKRAP) are required for interaction with ABI1. S694, S781, S790, and S801 each carry phosphoserine. Disordered stretches follow at residues 760–1460 (QGLP…AAGP) and 1475–1524 (GDPV…SLLD). The segment covering 812–844 (IPPPPQTAPPPPPAPYYFDSGPPPTFSPPPPPG) has biased composition (pro residues). Positions 857–869 (GLEARLGAGAAGL) are enriched in low complexity. 2 positions are modified to phosphoserine: S890 and S897. Residue T912 is modified to Phosphothreonine. Position 930 is a phosphotyrosine (Y930). R965 bears the Asymmetric dimethylarginine mark. Residue S995 is modified to Phosphoserine. Over residues 1016–1026 (VKERRLEERRR) the composition is skewed to basic and acidic residues. Residues 1078-1092 (LKPLVGGPSLGPSGS) show a composition bias toward low complexity. The span at 1122 to 1131 (SQTPSRSPTP) shows a compositional bias: polar residues. Phosphothreonine is present on T1130. Phosphoserine occurs at positions 1134, 1159, 1163, and 1166. A compositionally biased stretch (basic and acidic residues) spans 1174–1194 (ARREAEKPPREERKSPEDKKS). T1234 is modified (phosphothreonine). Low complexity predominate over residues 1235–1250 (PELAPAPMQAAAVAEP). Composition is skewed to pro residues over residues 1251–1261 (MPSPRAQPPGS) and 1321–1333 (TPPP…PTTV). Position 1253 is a phosphoserine (S1253). A compositionally biased stretch (basic and acidic residues) spans 1360-1370 (ADTRSSSDPHL). Positions 1371-1392 (ETTSTISTVSSMSTLSSESGEL) are enriched in low complexity. An SH3-binding motif is present at residues 1410 to 1416 (PPVPPKP). Position 1420 is a phosphoserine (S1420). Positions 1494–1514 (ISELSSRLQQLNKDTRSLGEE) form a coiled coil. A compositionally biased stretch (polar residues) spans 1495 to 1505 (SELSSRLQQLN). Phosphoserine is present on residues S1510, S1521, S1529, and S1539. Disordered regions lie at residues 1546-1584 (ISAQ…PASL) and 1627-1663 (VRSV…QQKP). Positions 1627–1637 (VRSVSARSRSP) are enriched in low complexity. 3 positions are modified to phosphoserine: S1634, S1636, and S1638. Residues 1638–1648 (SPSPLPSPSPG) are compositionally biased toward pro residues. The span at 1649 to 1658 (SGPSAGPRRP) shows a compositional bias: low complexity. Positions 1667-1730 (WSKFDVGDWL…ERALRQLDGS (64 aa)) constitute an SAM domain.

It belongs to the SHANK family. In terms of assembly, may homomultimerize via its SAM domain. Interacts with BAIAP2, DBNL and SLC17A7/VGLUT1. Interacts with DLGAP1/GKAP, GRM1/MGLUR1, GRM5/MGLUR5 and LZTS3 C-termini via its PDZ domain. Interacts with ABI1, HOMER1, HOMER2, HOMER3 and CTTN/cortactin SH3 domain. Is part of a complex with DLG4/PSD-95 and DLGAP1/GKAP. Interacts (via PDZ domain) with the GRIA1 subunit of the AMPA receptor (via PDZ-binding motif). Interacts with WASF1 and CYFIP2; the interactions mediate the association of SHANK3 with the WAVE1 complex. Interacts with ARPC2; the interaction probably mediates the association of SHANK3 with the Arp2/3 complex. Interacts (via ANK repeats) with SHARPIN and SPTAN1. Interacts (via PDZ domain) with ARHGAP44 (probably via PDZ-binding motif); the interaction takes place in dendritic spines and promotes GRIA1 exocytosis. Interacts with CAMK2A. Interacts with DIP2A. Interacts with ADGRL3. As to expression, in brain, highly expressed in striatum, thalamus, hippocampus and granule cells of the cerebellum.

It is found in the cytoplasm. The protein resides in the synapse. It localises to the postsynaptic density. Its subcellular location is the cell projection. The protein localises to the dendritic spine. Its function is as follows. Major scaffold postsynaptic density protein which interacts with multiple proteins and complexes to orchestrate the dendritic spine and synapse formation, maturation and maintenance. Interconnects receptors of the postsynaptic membrane including NMDA-type and metabotropic glutamate receptors via complexes with GKAP/PSD-95 and HOMER, respectively, and the actin-based cytoskeleton. Plays a role in the structural and functional organization of the dendritic spine and synaptic junction through the interaction with Arp2/3 and WAVE1 complex as well as the promotion of the F-actin clusters. By way of this control of actin dynamics, participates in the regulation of developing neurons growth cone motility and the NMDA receptor-signaling. Also modulates GRIA1 exocytosis and GRM5/MGLUR5 expression and signaling to control the AMPA and metabotropic glutamate receptor-mediated synaptic transmission and plasticity. May be required at an early stage of synapse formation and be inhibited by IGF1 to promote synapse maturation. The polypeptide is SH3 and multiple ankyrin repeat domains protein 3 (Shank3) (Mus musculus (Mouse)).